A 214-amino-acid polypeptide reads, in one-letter code: Alpha-S1-casein (214 aa).

A signal peptide spans 1–15 (MKLLILTCLVAVALA). A Phosphoserine; in allele A modification is found at serine 27. Serine 56 is subject to Phosphoserine; in allele C. Phosphoserine occurs at positions 61 and 63. The tract at residues 69 to 91 (MEDAKQMKAGSSSSSEEIVPNSA) is disordered. Serine 79 carries the post-translational modification Phosphoserine; in alleles A and C. Phosphoserine is present on serine 80. Position 81 is a phosphoserine; in alleles A and C (serine 81). Serine 82 is modified (phosphoserine). Serine 83 is subject to Phosphoserine; in alleles A and C. A Phosphoserine modification is found at serine 90. The segment at 105–111 (RYLGYLE) is opioid-like peptide sequence. Serine 130 carries the post-translational modification Phosphoserine.

Belongs to the alpha-casein family. In terms of tissue distribution, mammary gland specific. Secreted in milk.

Its subcellular location is the secreted. In terms of biological role, important role in the capacity of milk to transport calcium phosphate. In Ovis aries (Sheep), this protein is Alpha-S1-casein (CSN1S1).